We begin with the raw amino-acid sequence, 551 residues long: CTP synthase (551 aa).

The amidoligase domain stretch occupies residues 1–265 (MTRYLFITGG…DHIVAEKWGL (265 aa)). Ser13 lines the CTP pocket. Ser13 serves as a coordination point for UTP. ATP is bound by residues 14 to 19 (SLGKGI) and Asp71. Mg(2+) contacts are provided by Asp71 and Glu139. Residues 146–148 (DIE), 186–191 (KTKPTQ), and Lys222 each bind CTP. UTP-binding positions include 186–191 (KTKPTQ) and Lys222. In terms of domain architecture, Glutamine amidotransferase type-1 spans 290 to 541 (TVAMVGKYVD…LRAAIAHRDG (252 aa)). Gly351 serves as a coordination point for L-glutamine. Catalysis depends on Cys378, which acts as the Nucleophile; for glutamine hydrolysis. L-glutamine contacts are provided by residues 379 to 382 (LGMQ), Glu402, and Arg469. Residues His514 and Glu516 contribute to the active site.

It belongs to the CTP synthase family. Homotetramer.

The catalysed reaction is UTP + L-glutamine + ATP + H2O = CTP + L-glutamate + ADP + phosphate + 2 H(+). It catalyses the reaction L-glutamine + H2O = L-glutamate + NH4(+). It carries out the reaction UTP + NH4(+) + ATP = CTP + ADP + phosphate + 2 H(+). It participates in pyrimidine metabolism; CTP biosynthesis via de novo pathway; CTP from UDP: step 2/2. Allosterically activated by GTP, when glutamine is the substrate; GTP has no effect on the reaction when ammonia is the substrate. The allosteric effector GTP functions by stabilizing the protein conformation that binds the tetrahedral intermediate(s) formed during glutamine hydrolysis. Inhibited by the product CTP, via allosteric rather than competitive inhibition. Its function is as follows. Catalyzes the ATP-dependent amination of UTP to CTP with either L-glutamine or ammonia as the source of nitrogen. Regulates intracellular CTP levels through interactions with the four ribonucleotide triphosphates. In Halorhodospira halophila (strain DSM 244 / SL1) (Ectothiorhodospira halophila (strain DSM 244 / SL1)), this protein is CTP synthase.